The primary structure comprises 334 residues: Cathepsin J (334 aa).

The signal sequence occupies residues 1-17; that stretch reads MTPTVLLLILCFGVASG. Residues 18–113 constitute a propeptide, activation peptide; it reads AQAHDPKLDA…PHAQNHVSIG (96 aa). The N-linked (GlcNAc...) asparagine glycan is linked to Asn72. Cystine bridges form between Cys135-Cys178 and Cys169-Cys211. Residue Cys138 is part of the active site. N-linked (GlcNAc...) asparagine glycans are attached at residues Asn217, Asn221, and Asn268. Cys269 and Cys322 are oxidised to a cystine. Residues His276 and Asn300 contribute to the active site.

Belongs to the peptidase C1 family. Expressed specifically in placenta.

It is found in the lysosome. This is Cathepsin J (Ctsj) from Mus musculus (Mouse).